The sequence spans 597 residues: uncharacterized protein (597 aa).

2 disordered regions span residues 165–197 (NSRAVPPPAPPNPPKMEKHMSHDTSGRGSIFSK) and 278–344 (ERSS…RGTL). The segment covering 169–178 (VPPPAPPNPP) has biased composition (pro residues). Basic and acidic residues predominate over residues 179–189 (KMEKHMSHDTS). The segment covering 293–313 (STEVSITSSSPSPSSSSSTST) has biased composition (low complexity). Positions 402 to 465 (WSLDDVLLWL…LDDLSKIIEN (64 aa)) constitute an SAM domain. A disordered region spans residues 576 to 597 (EESQQKESSSSGISSSPQTPTE). Residues 581-597 (KESSSSGISSSPQTPTE) show a composition bias toward low complexity.

This is an uncharacterized protein from Caenorhabditis elegans.